Here is a 164-residue protein sequence, read N- to C-terminus: UPF0114 protein BCI_0033 (164 aa).

The next 3 helical transmembrane spans lie at 15–35 (LLFP…LKFF), 53–73 (LILI…LVMV), and 136–156 (IMWC…MAYI).

This sequence belongs to the UPF0114 family.

The protein resides in the cell membrane. This chain is UPF0114 protein BCI_0033, found in Baumannia cicadellinicola subsp. Homalodisca coagulata.